Reading from the N-terminus, the 1111-residue chain is NBPF family member NBPF9 (1111 aa).

Residues 70–130 adopt a coiled-coil conformation; that stretch reads MLRNERQFKE…RSLNEHLQAL (61 aa). Residues 161–198 form a disordered region; that stretch reads KLSPENDEDEDEDVQVEEDEKVLESSAPREVQKAEESK. Positions 165–181 are enriched in acidic residues; sequence ENDEDEDEDVQVEEDEK. In terms of domain architecture, Olduvai 1 spans 165–259; it reads ENDEDEDEDV…ECQDALNILP (95 aa). Residues 341-401 adopt a coiled-coil conformation; sequence MLRNERQFKE…RSLNEHLQAL (61 aa). Olduvai domains are found at residues 436 to 528, 529 to 600, 601 to 692, 695 to 750, 751 to 843, 844 to 919, 920 to 1012, and 1013 to 1111; these read ENDN…HIIP, ENES…VDIG, RHRW…PSCP, SREL…LDLD, RIKK…RSKK, KRRR…LDVD, and ERRR…IFPQ. Disordered regions lie at residues 451–474 and 510–569; these read EKVQKSSAPREMQKAEEKEVPEDS and TLIG…STPS. Acidic residues-rich tracts occupy residues 530-539 and 550-562; these read NESDDEEEEE and ESEEEEVPQESWD. Disordered stretches follow at residues 829–871 and 999–1033; these read KKGK…LDEK and KGKGKKRRGRRSKKERRRGRKEGEEDQNPPCPRLN. Composition is skewed to basic residues over residues 831-849 and 1000-1018; these read GKGKKRRGRRSKKKRRRGR and GKGKKRRGRRSKKERRRGR.

It belongs to the NBPF family. As to expression, expressed in a neuroblastoma cell line.

The protein localises to the cytoplasm. This Homo sapiens (Human) protein is NBPF family member NBPF9.